A 404-amino-acid polypeptide reads, in one-letter code: Cysteine desulfurase IscS (404 aa).

Pyridoxal 5'-phosphate is bound by residues 73–74 (AT), Asn-153, Gln-181, and 201–203 (SAH). Lys-204 is modified (N6-(pyridoxal phosphate)lysine). Thr-241 provides a ligand contact to pyridoxal 5'-phosphate. The active-site Cysteine persulfide intermediate is Cys-327. Position 327 (Cys-327) interacts with [2Fe-2S] cluster.

Belongs to the class-V pyridoxal-phosphate-dependent aminotransferase family. NifS/IscS subfamily. As to quaternary structure, homodimer. Forms a heterotetramer with IscU, interacts with other sulfur acceptors. The cofactor is pyridoxal 5'-phosphate.

The protein resides in the cytoplasm. The enzyme catalyses (sulfur carrier)-H + L-cysteine = (sulfur carrier)-SH + L-alanine. It participates in cofactor biosynthesis; iron-sulfur cluster biosynthesis. Functionally, master enzyme that delivers sulfur to a number of partners involved in Fe-S cluster assembly, tRNA modification or cofactor biosynthesis. Catalyzes the removal of elemental sulfur atoms from cysteine to produce alanine. Functions as a sulfur delivery protein for Fe-S cluster synthesis onto IscU, an Fe-S scaffold assembly protein, as well as other S acceptor proteins. The polypeptide is Cysteine desulfurase IscS (Anaeromyxobacter sp. (strain Fw109-5)).